The chain runs to 639 residues: Threonine--tRNA ligase (639 aa).

Positions 1-61 (MINITLKDGK…KEDSELEILT (61 aa)) constitute a TGS domain. The tract at residues 242-532 (DHRKLGKELD…LIEHFAGAFP (291 aa)) is catalytic. Zn(2+) is bound by residues cysteine 333, histidine 384, and histidine 509.

The protein belongs to the class-II aminoacyl-tRNA synthetase family. As to quaternary structure, homodimer. It depends on Zn(2+) as a cofactor.

Its subcellular location is the cytoplasm. It catalyses the reaction tRNA(Thr) + L-threonine + ATP = L-threonyl-tRNA(Thr) + AMP + diphosphate + H(+). Its function is as follows. Catalyzes the attachment of threonine to tRNA(Thr) in a two-step reaction: L-threonine is first activated by ATP to form Thr-AMP and then transferred to the acceptor end of tRNA(Thr). Also edits incorrectly charged L-seryl-tRNA(Thr). In Clostridium tetani (strain Massachusetts / E88), this protein is Threonine--tRNA ligase.